The primary structure comprises 352 residues: Serine/threonine-protein phosphatase 2A activator 2 (352 aa).

It belongs to the PTPA-type PPIase family.

The protein resides in the cytoplasm. It catalyses the reaction [protein]-peptidylproline (omega=180) = [protein]-peptidylproline (omega=0). PPIases accelerate the folding of proteins. It catalyzes the cis-trans isomerization of proline imidic peptide bonds in oligopeptides. Acts as a regulatory subunit for PP2A-like phosphatases modulating their activity or substrate specificity, probably by inducing a conformational change in the catalytic subunit, a direct target of the PPIase. Can reactivate inactive phosphatase PP2A-phosphatase methylesterase complexes (PP2Ai) in presence of ATP and Mg(2+) by dissociating the inactive form from the complex. This is Serine/threonine-protein phosphatase 2A activator 2 (rrd2) from Schizosaccharomyces pombe (strain 972 / ATCC 24843) (Fission yeast).